The following is a 122-amino-acid chain: Acidic phospholipase A2 2 (122 aa).

Intrachain disulfides connect cysteine 26–cysteine 115, cysteine 28–cysteine 44, cysteine 43–cysteine 95, cysteine 49–cysteine 122, cysteine 50–cysteine 88, cysteine 57–cysteine 81, and cysteine 75–cysteine 86. 3 residues coordinate Ca(2+): tyrosine 27, glycine 29, and glycine 31. Histidine 47 is a catalytic residue. A Ca(2+)-binding site is contributed by aspartate 48. Residue aspartate 89 is part of the active site.

This sequence belongs to the phospholipase A2 family. Group II subfamily. D49 sub-subfamily. Ca(2+) serves as cofactor. As to expression, expressed by the venom gland.

It localises to the secreted. The enzyme catalyses a 1,2-diacyl-sn-glycero-3-phosphocholine + H2O = a 1-acyl-sn-glycero-3-phosphocholine + a fatty acid + H(+). Functionally, snake venom phospholipase A2 (PLA2) that has high lipolytic activity. PLA2 catalyzes the calcium-dependent hydrolysis of the 2-acyl groups in 3-sn-phosphoglycerides. This Craspedocephalus gramineus (Bamboo pit viper) protein is Acidic phospholipase A2 2.